Reading from the N-terminus, the 51-residue chain is MADDANKVWPSGLTTAEAEELQKGLVDGTRVFGVIAVLAHILAYAYTPWLH.

Over 2-23 (ADDANKVWPSGLTTAEAEELQK) the chain is Cytoplasmic. The chain crosses the membrane as a helical span at residues 24–46 (GLVDGTRVFGVIAVLAHILAYAY). Residue histidine 40 coordinates a bacteriochlorophyll. Residues 47-51 (TPWLH) lie on the Periplasmic side of the membrane.

This sequence belongs to the antenna complex beta subunit family. As to quaternary structure, an alpha/beta heterodimer conjugated to 3 bacteriochlorophyll molecules. The core complex is formed by different alpha and beta chains, binding bacteriochlorophyll molecules, and arranged most probably in tetrameric structures disposed around the reaction center. The non-pigmented gamma chains may constitute additional components.

The protein resides in the cell inner membrane. Antenna complexes are light-harvesting systems, which transfer the excitation energy to the reaction centers. This chain is Light-harvesting protein B-800/850 beta chain (pucB), found in Rubrivivax gelatinosus (Rhodocyclus gelatinosus).